A 98-amino-acid polypeptide reads, in one-letter code: MSGLTADLDAVAAAGGYDDTDAMVEEAVRELLRRRPELRLSLAVEKYQSGAVSLNRAAELAGVSVEAFKDELADRGIDRDAGFLTDAQRDDHLQTFME.

This sequence belongs to the UPF0175 family.

This is UPF0175 protein VNG_0066H from Halobacterium salinarum (strain ATCC 700922 / JCM 11081 / NRC-1) (Halobacterium halobium).